Reading from the N-terminus, the 341-residue chain is MNNYLRKLVEGQHLTEEEMYKAGLLLLSENILESEIAAFLVLLKAKGETAEEIYGLVRALREKALPFSNHIQGAMDNCGTGGDGAQTFNISTTSAFVLAGAGVKVAKHGNRAVSSKTGSADLLEELGVNISSTPNEIDYLLEHVGIAFLFAPAMHPALRRIMKIRKELNVPTIFNLIGPLTNPVNLETQFVGIYKRDMLLPVAQVLQKLGRKQALVVNGSGFLDEASLQGENQVVLLKDNEIVEMNIDPENYGFSRVKNEEIRGGNSQENAKITVGVLSGEKSVYRDTVLLNAGLALFANGKTETIEEGIKLATHSIDSGKALTKLNLLIAASNEKLERVN.

5-phospho-alpha-D-ribose 1-diphosphate contacts are provided by residues G79, 82 to 83, T87, 89 to 92, 107 to 115, and S119; these read GD, NIST, and KHGNRAVSS. G79 serves as a coordination point for anthranilate. S91 contacts Mg(2+). N110 lines the anthranilate pocket. R165 provides a ligand contact to anthranilate. The Mg(2+) site is built by D224 and E225.

This sequence belongs to the anthranilate phosphoribosyltransferase family. In terms of assembly, homodimer. Mg(2+) serves as cofactor.

It catalyses the reaction N-(5-phospho-beta-D-ribosyl)anthranilate + diphosphate = 5-phospho-alpha-D-ribose 1-diphosphate + anthranilate. Its pathway is amino-acid biosynthesis; L-tryptophan biosynthesis; L-tryptophan from chorismate: step 2/5. Functionally, catalyzes the transfer of the phosphoribosyl group of 5-phosphorylribose-1-pyrophosphate (PRPP) to anthranilate to yield N-(5'-phosphoribosyl)-anthranilate (PRA). The polypeptide is Anthranilate phosphoribosyltransferase (Bacillus cereus (strain G9842)).